A 275-amino-acid chain; its full sequence is NH(3)-dependent NAD(+) synthetase (275 aa).

46–53 provides a ligand contact to ATP; the sequence is GISGGQDS. Asp-52 is a Mg(2+) binding site. Deamido-NAD(+) is bound at residue Arg-140. Residue Thr-160 participates in ATP binding. Glu-165 provides a ligand contact to Mg(2+). Lys-173 and Asp-180 together coordinate deamido-NAD(+). Positions 189 and 211 each coordinate ATP. Position 260–261 (260–261) interacts with deamido-NAD(+); sequence HK.

The protein belongs to the NAD synthetase family. In terms of assembly, homodimer.

The catalysed reaction is deamido-NAD(+) + NH4(+) + ATP = AMP + diphosphate + NAD(+) + H(+). It functions in the pathway cofactor biosynthesis; NAD(+) biosynthesis; NAD(+) from deamido-NAD(+) (ammonia route): step 1/1. Catalyzes the ATP-dependent amidation of deamido-NAD to form NAD. Uses ammonia as a nitrogen source. The chain is NH(3)-dependent NAD(+) synthetase from Escherichia coli O8 (strain IAI1).